The primary structure comprises 238 residues: Probable transcriptional regulatory protein SAK_1658 (238 aa).

It belongs to the TACO1 family. YeeN subfamily.

Its subcellular location is the cytoplasm. This is Probable transcriptional regulatory protein SAK_1658 from Streptococcus agalactiae serotype Ia (strain ATCC 27591 / A909 / CDC SS700).